We begin with the raw amino-acid sequence, 233 residues long: Ubiquinone biosynthesis O-methyltransferase (233 aa).

S-adenosyl-L-methionine contacts are provided by Arg37, Gly56, Asp77, and Met121.

Belongs to the methyltransferase superfamily. UbiG/COQ3 family.

The enzyme catalyses a 3-demethylubiquinol + S-adenosyl-L-methionine = a ubiquinol + S-adenosyl-L-homocysteine + H(+). It catalyses the reaction a 3-(all-trans-polyprenyl)benzene-1,2-diol + S-adenosyl-L-methionine = a 2-methoxy-6-(all-trans-polyprenyl)phenol + S-adenosyl-L-homocysteine + H(+). It functions in the pathway cofactor biosynthesis; ubiquinone biosynthesis. O-methyltransferase that catalyzes the 2 O-methylation steps in the ubiquinone biosynthetic pathway. In Azoarcus sp. (strain BH72), this protein is Ubiquinone biosynthesis O-methyltransferase.